Here is a 55-residue protein sequence, read N- to C-terminus: Protein CADMIUM TOLERANCE 1 (55 aa).

A helical membrane pass occupies residues Gly24–Tyr40.

The protein belongs to the CYSTM1 family.

Its subcellular location is the cell membrane. It localises to the secreted. The protein resides in the cell wall. Confers resistance to heavy metal ions (e.g. cadmium (CdCl(2)) and copper (CuCl(2))) by chelating them at the plasma membrane of root cells, thus stopping their entry and reducing their accumulation. The polypeptide is Protein CADMIUM TOLERANCE 1 (Echinochloa crus-galli subsp. caudata (Cockspur)).